We begin with the raw amino-acid sequence, 67 residues long: Photosystem II reaction center protein H (67 aa).

Residues 27–47 (GAVPVMAFVGVLLLVFLVILL) form a helical membrane-spanning segment.

The protein belongs to the PsbH family. In terms of assembly, PSII is composed of 1 copy each of membrane proteins PsbA, PsbB, PsbC, PsbD, PsbE, PsbF, PsbH, PsbI, PsbJ, PsbK, PsbL, PsbM, PsbT, PsbX, PsbY, Psb30/Ycf12, peripheral proteins PsbO, CyanoQ (PsbQ), PsbU, PsbV and a large number of cofactors. It forms dimeric complexes.

It is found in the cellular thylakoid membrane. One of the components of the core complex of photosystem II (PSII), required for its stability and/or assembly. PSII is a light-driven water:plastoquinone oxidoreductase that uses light energy to abstract electrons from H(2)O, generating O(2) and a proton gradient subsequently used for ATP formation. It consists of a core antenna complex that captures photons, and an electron transfer chain that converts photonic excitation into a charge separation. This is Photosystem II reaction center protein H from Prochlorococcus marinus (strain SARG / CCMP1375 / SS120).